A 367-amino-acid polypeptide reads, in one-letter code: 2-aminoethylphosphonate--pyruvate transaminase (367 aa).

K193 bears the N6-(pyridoxal phosphate)lysine mark.

The protein belongs to the class-V pyridoxal-phosphate-dependent aminotransferase family. PhnW subfamily. Homodimer. Pyridoxal 5'-phosphate serves as cofactor.

The enzyme catalyses (2-aminoethyl)phosphonate + pyruvate = phosphonoacetaldehyde + L-alanine. Functionally, involved in phosphonate degradation. The sequence is that of 2-aminoethylphosphonate--pyruvate transaminase from Vibrio vulnificus (strain CMCP6).